A 415-amino-acid polypeptide reads, in one-letter code: Serine hydroxymethyltransferase (415 aa).

(6S)-5,6,7,8-tetrahydrofolate-binding positions include L117 and 121–123; that span reads GHL. The residue at position 226 (K226) is an N6-(pyridoxal phosphate)lysine. (6S)-5,6,7,8-tetrahydrofolate contacts are provided by residues E241 and 349-351; that span reads SPF.

It belongs to the SHMT family. Homodimer. Requires pyridoxal 5'-phosphate as cofactor.

Its subcellular location is the cytoplasm. It catalyses the reaction (6R)-5,10-methylene-5,6,7,8-tetrahydrofolate + glycine + H2O = (6S)-5,6,7,8-tetrahydrofolate + L-serine. Its pathway is one-carbon metabolism; tetrahydrofolate interconversion. It functions in the pathway amino-acid biosynthesis; glycine biosynthesis; glycine from L-serine: step 1/1. In terms of biological role, catalyzes the reversible interconversion of serine and glycine with tetrahydrofolate (THF) serving as the one-carbon carrier. This reaction serves as the major source of one-carbon groups required for the biosynthesis of purines, thymidylate, methionine, and other important biomolecules. Also exhibits THF-independent aldolase activity toward beta-hydroxyamino acids, producing glycine and aldehydes, via a retro-aldol mechanism. The sequence is that of Serine hydroxymethyltransferase from Geobacter sulfurreducens (strain ATCC 51573 / DSM 12127 / PCA).